The following is a 243-amino-acid chain: Linker for activation of T-cells family member 2 (243 aa).

At 1 to 5 (MSSGT) the chain is on the extracellular side. Residues 6–26 (ELLWPGAALLVLLGVAASLCV) form a helical; Signal-anchor for type III membrane protein membrane-spanning segment. 2 S-palmitoyl cysteine lipidation sites follow: Cys25 and Cys28. Over 27 to 243 (RCSRPGAKRS…VNGEVAATEA (217 aa)) the chain is Cytoplasmic. The residue at position 44 (Ser44) is a Phosphoserine. A Phosphotyrosine modification is found at Tyr58. 2 positions are modified to phosphoserine: Ser59 and Ser92. Tyr136, Tyr193, and Tyr233 each carry phosphotyrosine. A disordered region spans residues 174–243 (PTSGLCPSAS…VNGEVAATEA (70 aa)).

In terms of assembly, when phosphorylated, interacts with GRB2. May also interact with SOS1, GAB1 and CBL. Phosphorylated on tyrosines following cross-linking of BCR in B-cells, FCGR1 in myeloid cells, or FCER1 in mast cells; which induces the recruitment of GRB2. Post-translationally, may be polyubiquitinated. In terms of tissue distribution, highly expressed in spleen, peripheral blood lymphocytes, and germinal centers of lymph nodes. Also expressed in placenta, lung, pancreas and small intestine. Present in B-cells, NK cells and monocytes. Absent from T-cells (at protein level).

The protein resides in the cell membrane. In terms of biological role, involved in FCER1 (high affinity immunoglobulin epsilon receptor)-mediated signaling in mast cells. May also be involved in BCR (B-cell antigen receptor)-mediated signaling in B-cells and FCGR1 (high affinity immunoglobulin gamma Fc receptor I)-mediated signaling in myeloid cells. Couples activation of these receptors and their associated kinases with distal intracellular events through the recruitment of GRB2. The chain is Linker for activation of T-cells family member 2 (LAT2) from Homo sapiens (Human).